Reading from the N-terminus, the 761-residue chain is uncharacterized protein (761 aa).

The segment at 1-84 (MIVKCPICDG…CGGSGKVVKC (84 aa)) adopts a CR-type zinc-finger fold. Residues 135 to 200 (GKFYKGVVTR…EKREIDFKYI (66 aa)) enclose the S1 motif domain.

This is an uncharacterized protein from Methanocaldococcus jannaschii (strain ATCC 43067 / DSM 2661 / JAL-1 / JCM 10045 / NBRC 100440) (Methanococcus jannaschii).